A 738-amino-acid polypeptide reads, in one-letter code: MNSMRISGHQSAVDARDHIEFAGGGRGPGNPGGGRGPGSPGGGRGPGSPGGGRGPGSPGGGRGPGSPGGGRGPGSPGGGRGPGSPGGGRGPGGGRGPSGGRGGDGRRREESPTDHEDGRINRSGRSTSTTTTRTSSTLARPTTVRAPVRPKGPIALPVTMTVREFSEATGVGAAEILKALLKAGVVANINQQIDYETAAVIAADFGIETVEYVPPQLEGIVENIRDVLAAQDPKDLKPRPPVVTIMGHVDHGKTKLLDAIRSTRVAESEAGGITQHIGAYQVELHGRKITFLDTPGHEAFTAMRARGAQVTDIVVLVVAADDGVMPQTLEAISHVKAAGVPMIVAINKIDAPNANPDRVRQQLANAGVIVEQFGGDVPSVEVSAKLKKNIDGLLEMILLVADLNEYKANPNAPAVGTIVEAEMDRTRGPVATVLVQNGTLRLEDNVLVGATTGTIRTMFNDAGKRLRFAEPATPVVILGLNDVPQAGDILQVMPDLTVAREIALQRQRKQRLEAMASTRGVSLDGLFSSIQQGKIKELNIILKADVQGSIGAIEHALSQLNTDEVQIRIIHRGTGTITESDVNLAIASHAIIIGFNARPDPAARRQAEQYGVDIRFYNIIYQLTEDIKKAMIGMLEPEYREVTEGFAEVRTTFRLPTREIVAGLYVTEGKITRQYNVRVLRNGVVIHDGKIASLKRFKDDVREVQAGYECGLIVEGFNDITPGDTMEFYRRERVERTV.

Positions 1 to 10 (MNSMRISGHQ) are enriched in polar residues. The segment at 1-150 (MNSMRISGHQ…PTTVRAPVRP (150 aa)) is disordered. A compositionally biased stretch (gly residues) spans 22–102 (AGGGRGPGNP…GGRGPSGGRG (81 aa)). Residues 103–120 (GDGRRREESPTDHEDGRI) show a composition bias toward basic and acidic residues. Positions 121 to 143 (NRSGRSTSTTTTRTSSTLARPTT) are enriched in low complexity. The 168-residue stretch at 238–405 (PRPPVVTIMG…MILLVADLNE (168 aa)) folds into the tr-type G domain. The segment at 247-254 (GHVDHGKT) is G1. 247-254 (GHVDHGKT) contacts GTP. The G2 stretch occupies residues 272–276 (GITQH). The G3 stretch occupies residues 293–296 (DTPG). GTP contacts are provided by residues 293–297 (DTPGH) and 347–350 (NKID). The segment at 347 to 350 (NKID) is G4. The G5 stretch occupies residues 383–385 (SAK).

The protein belongs to the TRAFAC class translation factor GTPase superfamily. Classic translation factor GTPase family. IF-2 subfamily.

Its subcellular location is the cytoplasm. Its function is as follows. One of the essential components for the initiation of protein synthesis. Protects formylmethionyl-tRNA from spontaneous hydrolysis and promotes its binding to the 30S ribosomal subunits. Also involved in the hydrolysis of GTP during the formation of the 70S ribosomal complex. This Roseiflexus castenholzii (strain DSM 13941 / HLO8) protein is Translation initiation factor IF-2.